A 97-amino-acid polypeptide reads, in one-letter code: Protein RALF-like 2 (97 aa).

The signal sequence occupies residues 1-25 (MEARHMLVTILLLSFVFMNIMKVEA). Disulfide bonds link Cys42/Cys49 and Cys61/Cys67.

It belongs to the plant rapid alkalinization factor (RALF) family.

Its subcellular location is the secreted. Its function is as follows. Cell signaling peptide that may regulate plant stress, growth, and development. Mediates a rapid alkalinization of extracellular space by mediating a transient increase in the cytoplasmic Ca(2+) concentration leading to a calcium-dependent signaling events through a cell surface receptor and a concomitant activation of some intracellular mitogen-activated protein kinases. This is Protein RALF-like 2 (RALFL2) from Arabidopsis thaliana (Mouse-ear cress).